A 211-amino-acid chain; its full sequence is MAYEYNEEWVPQTRLGKLVFDGQVTSMDEAMDSGLPIRESKIVDLLLPELEDEVLDINMVQRMTDSGRRVKFRATVIVGNGDGFVGLGQAKDVQVGPAIRKAIDNAKINITRIKRGCGSWECGCGLPHTVPSEVNGKAGSVTVVLKPAPRGLGLAAGGTARKVLEKAGVKDVWTRTEGQTRTTLNFAKATYNALMNTGTVRRPIVFDETEA.

Residues 50-113 (LEDEVLDINM…DNAKINITRI (64 aa)) form the S5 DRBM domain.

The protein belongs to the universal ribosomal protein uS5 family. Part of the 30S ribosomal subunit. Contacts protein S4.

Its function is as follows. With S4 and S12 plays an important role in translational accuracy. The polypeptide is Small ribosomal subunit protein uS5 (Methanococcoides burtonii (strain DSM 6242 / NBRC 107633 / OCM 468 / ACE-M)).